A 323-amino-acid polypeptide reads, in one-letter code: Mitochondrial glutamate carrier 1 (323 aa).

Solcar repeat units follow at residues 6–93 (ISLP…FRHQ), 101–214 (LTLP…LNQL), and 223–312 (SPFY…GIAE). 6 helical membrane passes run 12–32 (LINGGIAGLIGVTCVFPIDLA), 62–82 (YFGMYRGAAVNLTLVTPEKAI), 107–127 (MLAGCGAGTCQVIVTTPMEML), 189–209 (GLGATLLRDVPFSIVYFPLFA), 223–243 (SPFYVSFLAGCVAGSAAAVAV), and 292–312 (ALVIAPLFGIAQVVYFLGIAE).

This sequence belongs to the mitochondrial carrier (TC 2.A.29) family.

The protein resides in the mitochondrion inner membrane. It catalyses the reaction L-glutamate(in) + H(+)(in) = L-glutamate(out) + H(+)(out). In terms of biological role, mitochondrial glutamate/H(+) symporter. Responsible for the transport of glutamate from the cytosol into the mitochondrial matrix with the concomitant import of a proton. Plays a role in the control of glucose-stimulated insulin secretion. This chain is Mitochondrial glutamate carrier 1 (Slc25a22), found in Mus musculus (Mouse).